Reading from the N-terminus, the 87-residue chain is Small ribosomal subunit protein bS20 (87 aa).

Belongs to the bacterial ribosomal protein bS20 family.

Its function is as follows. Binds directly to 16S ribosomal RNA. This Rhizorhabdus wittichii (strain DSM 6014 / CCUG 31198 / JCM 15750 / NBRC 105917 / EY 4224 / RW1) (Sphingomonas wittichii) protein is Small ribosomal subunit protein bS20.